The following is a 586-amino-acid chain: Tetratricopeptide repeat protein 39B (586 aa).

3 TPR repeats span residues 292 to 325 (SIILFYAARIDILKGRFEQAQETFQKCIVSQQEW), 483 to 516 (CLVQLLKGVCLKHLGRLLQAELCFNQVIQSEKRV), and 524 to 557 (PFTFYELGLLYKEQGDRDKAIRYIETAKGNYKDY).

It belongs to the TTC39 family.

Its function is as follows. May be involved in lipid metabolism. The sequence is that of Tetratricopeptide repeat protein 39B (ttc39b) from Xenopus laevis (African clawed frog).